The sequence spans 271 residues: Formamidopyrimidine-DNA glycosylase (271 aa).

The Schiff-base intermediate with DNA role is filled by proline 2. The active-site Proton donor is glutamate 3. Lysine 58 acts as the Proton donor; for beta-elimination activity in catalysis. Residues histidine 92, arginine 111, and arginine 152 each coordinate DNA. Residues 237 to 271 (FVYGREGEACKQCGRVLKHATIGQRATVWCGSCQR) form an FPG-type zinc finger. Arginine 261 acts as the Proton donor; for delta-elimination activity in catalysis.

It belongs to the FPG family. Monomer. Zn(2+) is required as a cofactor.

The enzyme catalyses Hydrolysis of DNA containing ring-opened 7-methylguanine residues, releasing 2,6-diamino-4-hydroxy-5-(N-methyl)formamidopyrimidine.. It carries out the reaction 2'-deoxyribonucleotide-(2'-deoxyribose 5'-phosphate)-2'-deoxyribonucleotide-DNA = a 3'-end 2'-deoxyribonucleotide-(2,3-dehydro-2,3-deoxyribose 5'-phosphate)-DNA + a 5'-end 5'-phospho-2'-deoxyribonucleoside-DNA + H(+). Involved in base excision repair of DNA damaged by oxidation or by mutagenic agents. Acts as a DNA glycosylase that recognizes and removes damaged bases. Has a preference for oxidized purines, such as 7,8-dihydro-8-oxoguanine (8-oxoG). Has AP (apurinic/apyrimidinic) lyase activity and introduces nicks in the DNA strand. Cleaves the DNA backbone by beta-delta elimination to generate a single-strand break at the site of the removed base with both 3'- and 5'-phosphates. The sequence is that of Formamidopyrimidine-DNA glycosylase from Xanthomonas axonopodis pv. citri (strain 306).